The primary structure comprises 320 residues: Cytochrome f (320 aa).

A signal peptide spans 1 to 35; the sequence is MQTRKTFSWIKEQITRSISASLMIYIITRTSISSA. Residues Tyr36, Cys56, Cys59, and His60 each coordinate heme. A helical membrane pass occupies residues 286 to 306; sequence VQGLLFFLASVILAQIFLVLK.

This sequence belongs to the cytochrome f family. In terms of assembly, the 4 large subunits of the cytochrome b6-f complex are cytochrome b6, subunit IV (17 kDa polypeptide, petD), cytochrome f and the Rieske protein, while the 4 small subunits are PetG, PetL, PetM and PetN. The complex functions as a dimer. The cofactor is heme.

Its subcellular location is the plastid. It localises to the chloroplast thylakoid membrane. Functionally, component of the cytochrome b6-f complex, which mediates electron transfer between photosystem II (PSII) and photosystem I (PSI), cyclic electron flow around PSI, and state transitions. The polypeptide is Cytochrome f (Panax ginseng (Korean ginseng)).